A 44-amino-acid polypeptide reads, in one-letter code: Thymosin beta-12 (44 aa).

Basic and acidic residues-rich tracts occupy residues 1–25 (MSDK…ETQE) and 33–44 (ETIEQEKAAATS). The tract at residues 1 to 44 (MSDKPDISEVTSFDKTKLKKTETQEKNPLPSKETIEQEKAAATS) is disordered. Serine 2 bears the N-acetylserine mark.

This sequence belongs to the thymosin beta family.

It localises to the cytoplasm. The protein resides in the cytoskeleton. In terms of biological role, plays an important role in the organization of the cytoskeleton. Binds to and sequesters actin monomers (G actin) and therefore inhibits actin polymerization. This Lateolabrax japonicus (Japanese sea perch) protein is Thymosin beta-12.